Reading from the N-terminus, the 545-residue chain is Acetyltransferase BOT5 (545 aa).

The signal sequence occupies residues 1 to 19; the sequence is MATIPLFFSLILFLRLYHA. N-linked (GlcNAc...) asparagine glycosylation is found at N70 and N198. H208 acts as the Proton acceptor in catalysis. 2 N-linked (GlcNAc...) asparagine glycosylation sites follow: N346 and N445. Residues 466–493 are disordered; the sequence is GAGNQKSSSTRKAARHTEPTQAQTQPGR.

Belongs to the plant acyltransferase family.

The protein operates within secondary metabolite biosynthesis. Functionally, acetyltransferase; part of the gene cluster that mediates the biosynthesis of botrydial. Botrydial is necessary for colonization of plant tissue by the T4 strain. It is a strain-dependent virulence factor since highly aggressive strains like SAS56 or B05 still retain substantial virulence when botrydial synthesis is impaired, since they produce also botcinic acid. The first step of botrydial biosynthesis is performed by the sesquiterpene synthase BOT2 which catalyzes the cyclization of farnesyl diphosphate (FPP) to presilphiperfolan-8-beta-ol (PSP). The cytochrome P450 monooxygenase BOT4 then catalyzes the hydroxylation at C-4 to give a probotryane intermediate. Acetylation of the hydroxyl at C-4 is carried out by the acetyltransferase BOT5, followed by the combined action of the P450 monooxygenases BOT3 and BOT1, to yield finally the glycol, via the regio- and stereospecific hydroxylations at C-10 and C-15 of the probotryane intermediates, respectively. The cleavage of the C10-C15 bond of probotryane skeleton is an intriguing and chemically important reaction, which could be mediated by some of the monooxygenases or by a combination of them. It is possible that either BOT3 or BOT1 would oxidize either the 10- or the 15-hydroxy group to the hydroperoxide derivative, which would then undergo heterolytic fragmentation to give the dialdehyde botrydial. Finally, the dehydrogenase BOT7 might be involved in the conversion of botrydial to dihydrobotrydial. In Botryotinia fuckeliana (Noble rot fungus), this protein is Acetyltransferase BOT5.